The sequence spans 60 residues: DNA gyrase inhibitor YacG (60 aa).

Residues Cys-15, Cys-18, Cys-30, and Cys-34 each contribute to the Zn(2+) site.

This sequence belongs to the DNA gyrase inhibitor YacG family. In terms of assembly, interacts with GyrB. Zn(2+) is required as a cofactor.

Inhibits all the catalytic activities of DNA gyrase by preventing its interaction with DNA. Acts by binding directly to the C-terminal domain of GyrB, which probably disrupts DNA binding by the gyrase. This chain is DNA gyrase inhibitor YacG, found in Bradyrhizobium diazoefficiens (strain JCM 10833 / BCRC 13528 / IAM 13628 / NBRC 14792 / USDA 110).